Here is a 21-residue protein sequence, read N- to C-terminus: VTVYDAEGTKVQLDGSIRLVM.

As to quaternary structure, disulfide bond interactions within and between MOMP molecules and other components form high molecular-weight oligomers.

It is found in the cell outer membrane. In terms of biological role, structural rigidity of the outer membrane of elementary bodies and porin forming, permitting diffusion of solutes through the intracellular reticulate body membrane. The protein is Major outer membrane protein of Actinobacillus equuli.